The sequence spans 1818 residues: MAGPCCSPWVKLLLLAAMLSASLPGDLANRCKKAQVKSCTECIRVDKSCAYCTDELFKERRCNTQAELLAAGCRGESILVMESSLEITENTQIDTSLHRSQVSPQGLQVRLRPGEERSFVFQVFEPLESPVDLYILMDFSNSMSDDLDNLKQMGQNLAKILRQLTSDYTIGFGKFVDKVSVPQTDMRPEKLKEPWPNSDPPFSFKNVISLTENVEEFWNKLQGERISGNLDAPEGGFDAILQTAVCTRDIGWRADSTHLLVFSTESAFHYEADGANVLAGIMNRNDEKCHLDASGAYTQYKTQDYPSVPTLVRLLAKHNIIPIFAVTNYSYSYYEKLHKYFPVSSLGVLQEDSSNIVELLEEAFYRIRSNLDIRALDSPRGLRTEVTSDTLQKTETGSFHIKRGEVGTYNVHLRAVEDIDGTHVCQLAKEDQGGNIHLKPSFSDGLRMDASVICDVCPCELQKEVRSARCHFRGDFMCGHCVCNEGWSGKTCNCSTGSLSDTQPCLREGEDKPCSGHGECQCGRCVCYGEGRYEGHFCEYDNFQCPRTSGFLCNDRGRCSMGECVCEPGWTGRSCDCPLSNATCIDSNGGICNGRGYCECGRCHCNQQSLYTDTTCEINYSAIRLGLCEDLRSCVQCQAWGTGEKKGRACDDCPFKVKMVDELKKAEEVVEYCSFRDEDDDCTYSYNVEGDGSPGPNSTVLVHKKKDCPPGSFWWLIPLLIFLLLLLALLLLLCWKYCACCKACLGLLPCCNRGHMVGFKEDHYMLRENLMASDHLDTPMLRSGNLKGRDTVRWKITNNVQRPGFATHAASTSPTELVPYGLSLRLGRLCTENLMKPGTRECDQLRQEVEENLNEVYRQVSGAHKLQQTKFRQQPNTGKKQDHTIVDTVLLAPRSAKQMLLKLTEKQVEQGSFHELKVAPGYYTVTAEQDARGMVEFQEGVELVDVRVPLFIRPEDDDEKQLLVEAIDVPVGTATLGRRLVNITIIKEQASGVVSFEQPEYSVSRGDQVARIPVIRHILDNGKSQVSYSTQDNTAHGHRDYVPVEGELLFHPGETWKELQVKLLELQEVDSLLRGRQVRRFQVQLSNPKFGARLGQPSTTTVILGEHDETDRSLINQTLSSPPPPHGDLGAPQNPNAKAAGSRKIHFNWLPPPGKPMGYRVKYWIQGDSESEAHLLDSKVPSVELTNLYPYCDYEMKVCAYGAQGEGPYSSLVSCRTHQEVPSEPGRLAFNVVSSTVTQLSWAEPAETNGEITAYEVCYGLVNEDNRPIGPMKKVLVDNPKNRMLLIENLRESQPYRYTVKARNGAGWGPEREAIINLATQPKRPMSIPIIPDIPIVDAQGGEDYENFLMYSDDVLRSPASSQRPSVSDDTGCGWKFEPLLGEELDLRRVTWRLPPELIPRLSASSGRSDEDGSVAGGVEGEGSGWIRGATPRPPGEHLVNGRMDFAYPGSANSLHRMTAANVAYGTHLSPHLSHRVLSTSSTLTRDYHSLTRTEHSHSGTLPRDYSTLTSLSSQDSRGAVGVPDTPTRLVFSALGPTSLKVSWQEPQCDRMLLGYSVEYQLLNGGEMHRLNIPNPGQTSVVVEDLLPNHSYVFRVRAQSQEGWGREREGVITIESQVHPQSPLCPLPGSAFTLSTPSAPGPLVFTALSPDSLQLSWERPRRPNGDILGYLVTCEMAQGGAPARTFRVDGDNPESRLTVPGLSENVPYKFKVQARTTEGFGPEREGIITIESQVGGPFPQLGSHSGLFQNPVQSEFSSVTSTHSTTTEPFLMDGLTLGTQRLEAGGSLTRHVTQEFVTRTLTASGSLSTHMDQQFFQT.

Positions 1 to 28 are cleaved as a signal peptide; that stretch reads MAGPCCSPWVKLLLLAAMLSASLPGDLA. At 29–712 the chain is on the extracellular side; the sequence is NRCKKAQVKS…HKKKDCPPGS (684 aa). Positions 30 to 74 constitute a PSI domain; sequence RCKKAQVKSCTECIRVDKSCAYCTDELFKERRCNTQAELLAAGCR. 8 disulfide bridges follow: C31-C49, C39-C457, C42-C62, C52-C73, C246-C289, C459-C478, C470-C481, and C483-C492. A VWFA domain is found at 132 to 310; it reads DLYILMDFSN…KTQDYPSVPT (179 aa). Positions 140 and 142 each coordinate Mg(2+). The Ca(2+) site is built by S142, D145, D146, and D177. The segment at 195-200 is involved in NRG1- and IGF1-binding; sequence WPNSDP. Positions 229, 231, 233, and 234 each coordinate Ca(2+). E234 serves as a coordination point for Mg(2+). A glycan (N-linked (GlcNAc...) asparagine) is linked at N328. Residue E351 participates in Ca(2+) binding. 4 consecutive I-EGF domains span residues 459–493, 494–539, 540–576, and 577–617; these read CELQ…KTCN, CSTG…HFCE, YDNF…RSCD, and CPLS…TTCE. A Cell attachment site motif is present at residues 473–475; it reads RGD. N-linked (GlcNAc...) asparagine glycosylation is present at N493. 11 cysteine pairs are disulfide-bonded: C494–C522, C505–C520, C514–C525, C527–C538, C545–C559, C553–C564, C566–C575, C577–C600, C584–C598, C592–C603, and C605–C616. A glycan (N-linked (GlcNAc...) asparagine) is linked at N581. N619 is a glycosylation site (N-linked (GlcNAc...) asparagine). Disulfide bonds link C628–C673, C634–C653, C637–C650, and C682–C708. N697 carries N-linked (GlcNAc...) asparagine glycosylation. The chain crosses the membrane as a helical span at residues 713-733; sequence FWWLIPLLIFLLLLLALLLLL. The segment at 734 to 751 is palmitoylated on several cysteines; sequence CWKYCACCKACLGLLPCC. The Cytoplasmic segment spans residues 734-1818; that stretch reads CWKYCACCKA…THMDQQFFQT (1085 aa). The residue at position 773 (S773) is a Phosphoserine. Residues 981–1086 form the Calx-beta domain; sequence VNITIIKEQA…QVRRFQVQLS (106 aa). A Cell attachment site motif is present at residues 1005-1007; it reads RGD. S1071 and S1121 each carry phosphoserine. The segment at 1115-1137 is disordered; sequence INQTLSSPPPPHGDLGAPQNPNA. Fibronectin type-III domains lie at 1131-1220 and 1224-1323; these read APQN…THQE and EPGR…TQPK. The segment at 1402-1433 is disordered; the sequence is LSASSGRSDEDGSVAGGVEGEGSGWIRGATPR. A compositionally biased stretch (gly residues) spans 1415-1426; that stretch reads VAGGVEGEGSGW. 3 positions are modified to phosphoserine: S1451, S1454, and S1470. At T1483 the chain carries Phosphothreonine. Residue S1490 is modified to Phosphoserine. A Phosphothreonine modification is found at T1526. Fibronectin type-III domains are found at residues 1526–1621 and 1639–1735; these read TPTR…VHPQ and APGP…SQVG. Residue S1787 is modified to Phosphoserine.

Belongs to the integrin beta chain family. As to quaternary structure, heterodimer of an alpha and a beta subunit. Beta-4 associates with alpha-6. Interacts (via cytoplasmic region) with COL17A1 (via cytoplasmic region). Interacts (via cytoplasmic region) with DST isoform 3 (via N-terminus). Interacts (via cytoplasmic domain) with DST (via N-terminus). Interacts with RAC1. ITGA6:ITGB4 is found in a ternary complex with NRG1 and ERBB3. ITGA6:ITGB4 is found in a ternary complex with IGF1 and IGF1R. ITGA6:ITGB4 interacts with IGF2. Interacts with TMEM268; this interaction prevents ITGB4 degradation. Palmitoylated by DHHC3 at several cysteines of the membrane-proximal region, enhancing stability and cell surface expression. Palmitoylation also promotes secondary association with tertaspanins.

It localises to the cell membrane. It is found in the cell junction. The protein localises to the hemidesmosome. Functionally, integrin alpha-6/beta-4 is a receptor for laminin. It plays a critical structural role in the hemidesmosome of epithelial cells. Is required for the regulation of keratinocyte polarity and motility. ITGA6:ITGB4 binds to NRG1 (via EGF domain) and this binding is essential for NRG1-ERBB signaling. ITGA6:ITGB4 binds to IGF1 and this binding is essential for IGF1 signaling. ITGA6:ITGB4 binds to IGF2 and this binding is essential for IGF2 signaling. The sequence is that of Integrin beta-4 (Itgb4) from Mus musculus (Mouse).